The sequence spans 997 residues: Protein translocase subunit SecA (997 aa).

ATP-binding positions include glutamine 102, 120 to 124, and aspartate 521; that span reads GEGKT. Positions 893-997 are disordered; it reads PADASPNGVV…KYKKCHGAEA (105 aa). Residues 938 to 953 show a composition bias toward basic and acidic residues; that stretch reads AIEREFEKKKQQELSH. The Zn(2+) site is built by cysteine 981, cysteine 983, cysteine 992, and histidine 993. Positions 987 to 997 are enriched in basic residues; it reads KKYKKCHGAEA.

It belongs to the SecA family. As to quaternary structure, monomer and homodimer. Part of the essential Sec protein translocation apparatus which comprises SecA, SecYEG and auxiliary proteins SecDF. Other proteins may also be involved. The cofactor is Zn(2+).

It localises to the cell inner membrane. The protein localises to the cytoplasm. The enzyme catalyses ATP + H2O + cellular proteinSide 1 = ADP + phosphate + cellular proteinSide 2.. Part of the Sec protein translocase complex. Interacts with the SecYEG preprotein conducting channel. Has a central role in coupling the hydrolysis of ATP to the transfer of proteins into and across the cell membrane, serving as an ATP-driven molecular motor driving the stepwise translocation of polypeptide chains across the membrane. This chain is Protein translocase subunit SecA, found in Acidobacterium capsulatum (strain ATCC 51196 / DSM 11244 / BCRC 80197 / JCM 7670 / NBRC 15755 / NCIMB 13165 / 161).